Consider the following 417-residue polypeptide: MMPTKPLAEADPQIAQLIREETRRQAEGLELIASENFVSPAVMEAMGSTLTNKYAEGYPGKRYYGGCEVVDKVEQLAIDRAKQLFGAEHANVQPHSGSQANMAAYFALATPGDTVLAMSLNFGGHLTHGSPVNFSGKLFKIVPYGLKQSDETIDMDEVARLAREHRPKVLMVGASAYPRTLHFDRFAGIAREVGAALVVDMAHIAGLVAAGLHPNPVPHAEIVTTTTHKTLRGPRGGLILTREAHAKVLNSQIFPGIQGGPLEHVIAAKAVAFHEALQPSFKEYQRRIVENAQALAEGLKEAGLRLVSGGTDNHLMLVDLRPKKLTGKIGEEALGKAGITVNKNMIPWDPEKPMTTSGIRVGTPALTTRGMGPGEMATVASLIGRVLDAPADEKVIAAVRGEVRELCAQFPMYQDRL.

Residues L120 and 124-126 (GHL) contribute to the (6S)-5,6,7,8-tetrahydrofolate site. K229 is modified (N6-(pyridoxal phosphate)lysine).

This sequence belongs to the SHMT family. In terms of assembly, homodimer. The cofactor is pyridoxal 5'-phosphate.

It localises to the cytoplasm. It carries out the reaction (6R)-5,10-methylene-5,6,7,8-tetrahydrofolate + glycine + H2O = (6S)-5,6,7,8-tetrahydrofolate + L-serine. The protein operates within one-carbon metabolism; tetrahydrofolate interconversion. It participates in amino-acid biosynthesis; glycine biosynthesis; glycine from L-serine: step 1/1. Its function is as follows. Catalyzes the reversible interconversion of serine and glycine with tetrahydrofolate (THF) serving as the one-carbon carrier. This reaction serves as the major source of one-carbon groups required for the biosynthesis of purines, thymidylate, methionine, and other important biomolecules. Also exhibits THF-independent aldolase activity toward beta-hydroxyamino acids, producing glycine and aldehydes, via a retro-aldol mechanism. The protein is Serine hydroxymethyltransferase of Anaeromyxobacter sp. (strain Fw109-5).